Reading from the N-terminus, the 378-residue chain is Chaperone protein DnaJ (378 aa).

A J domain is found at 5-70 (DFYEILGVSK…EKRSAYDRMG (66 aa)). The CR-type zinc finger occupies 137-215 (GCKKEISFTA…CHGNGVKDKS (79 aa)). Zn(2+)-binding residues include C150, C153, C167, C170, C189, C192, C203, and C206. 4 CXXCXGXG motif repeats span residues 150-157 (CDTCDGKG), 167-174 (CQTCHGQG), 189-196 (CPHCGGTG), and 203-210 (CSDCHGNG).

The protein belongs to the DnaJ family. As to quaternary structure, homodimer. It depends on Zn(2+) as a cofactor.

The protein localises to the cytoplasm. In terms of biological role, participates actively in the response to hyperosmotic and heat shock by preventing the aggregation of stress-denatured proteins and by disaggregating proteins, also in an autonomous, DnaK-independent fashion. Unfolded proteins bind initially to DnaJ; upon interaction with the DnaJ-bound protein, DnaK hydrolyzes its bound ATP, resulting in the formation of a stable complex. GrpE releases ADP from DnaK; ATP binding to DnaK triggers the release of the substrate protein, thus completing the reaction cycle. Several rounds of ATP-dependent interactions between DnaJ, DnaK and GrpE are required for fully efficient folding. Also involved, together with DnaK and GrpE, in the DNA replication of plasmids through activation of initiation proteins. The protein is Chaperone protein DnaJ of Psychrobacter cryohalolentis (strain ATCC BAA-1226 / DSM 17306 / VKM B-2378 / K5).